We begin with the raw amino-acid sequence, 215 residues long: Beta-crystallin A3 (215 aa).

The tract at residues Met-1 to Pro-30 is N-terminal arm. 2 Beta/gamma crystallin 'Greek key' domains span residues Trp-31–Cys-70 and Gly-71–Cys-117. Residues Ser-118 to Glu-123 are connecting peptide. 2 Beta/gamma crystallin 'Greek key' domains span residues Ser-124 to Cys-165 and Gly-166 to Gln-214.

Belongs to the beta/gamma-crystallin family. In terms of assembly, homo/heterodimer, or complexes of higher-order. The structure of beta-crystallin oligomers seems to be stabilized through interactions between the N-terminal arms.

In terms of biological role, crystallins are the dominant structural components of the vertebrate eye lens. The polypeptide is Beta-crystallin A3 (CRYBA1) (Gallus gallus (Chicken)).